The chain runs to 511 residues: Ribonuclease Y (511 aa).

A helical membrane pass occupies residues 3-23; it reads VGILIGIIILGVVGFIQYTLI. The KH domain maps to 201–286; the sequence is TVHVVALPND…EMVERAIKDV (86 aa). In terms of domain architecture, HD spans 327–420; the sequence is VLKHSIEVSY…VQAADAISAA (94 aa).

This sequence belongs to the RNase Y family.

The protein resides in the cell membrane. Functionally, endoribonuclease that initiates mRNA decay. The protein is Ribonuclease Y of Clostridium perfringens (strain SM101 / Type A).